The sequence spans 157 residues: Galactose-specific lectin (157 aa).

Residues 12 to 157 (SIVVGTWGAE…LDYIGFHLAL (146 aa)) form the Jacalin-type lectin domain. Asn-45 carries an N-linked (GlcNAc...) asparagine glycan.

The protein belongs to the jacalin lectin family. In terms of assembly, tetramer of heterodimers of light and heavy chains which are non-covalently linked. Post-translationally, N-linked carbohydrates at Asn-45 can be of complex or paucimannose type.

Alpha-D-galactose-specific lectin. Has hemagglutinating activity towards human and rabbit erythrocytes. Is highly cytotoxic to human cells in vitro. The polypeptide is Galactose-specific lectin (Morus indica (Mulberry)).